A 218-amino-acid polypeptide reads, in one-letter code: Adenylate kinase (218 aa).

Residue 10–15 (GAGKGT) coordinates ATP. The tract at residues 30–59 (STGDMLRAAVQAQTPVGIEAKKVMDAGKLV) is NMP. Residues Thr31, Arg36, 57-59 (KLV), 85-88 (GFPR), and Gln92 contribute to the AMP site. The segment at 122 to 159 (GRRVHLSSGRTYHVRFNPPKKEGLDDLTGEPLVQREDD) is LID. ATP-binding positions include Arg123 and 132-133 (TY). The AMP site is built by Arg156 and Arg167. Gly203 provides a ligand contact to ATP.

This sequence belongs to the adenylate kinase family. As to quaternary structure, monomer.

It is found in the cytoplasm. The enzyme catalyses AMP + ATP = 2 ADP. It functions in the pathway purine metabolism; AMP biosynthesis via salvage pathway; AMP from ADP: step 1/1. Functionally, catalyzes the reversible transfer of the terminal phosphate group between ATP and AMP. Plays an important role in cellular energy homeostasis and in adenine nucleotide metabolism. This chain is Adenylate kinase, found in Chlorobium phaeobacteroides (strain DSM 266 / SMG 266 / 2430).